Here is a 343-residue protein sequence, read N- to C-terminus: F17e-G fimbrial adhesin (343 aa).

Positions 1–22 are cleaved as a signal peptide; sequence MTNFYKVFLAVFILVCCNISHA. Residues 23 to 199 form a receptor-binding lectin domain region; sequence AVSFIGSTEN…LNPFTLNDTV (177 aa). A carbohydrate-binding positions include 65 to 66, 110 to 111, and 138 to 141; these read AN, DT, and STQG. Cysteine 75 and cysteine 132 are joined by a disulfide. Residues 200–343 form a fimbrillin-binding domain region; the sequence is TSCRLLTPSA…GISTFTFSYQ (144 aa). Residues 287–307 are disordered; that stretch reads LKFGPDSPVKGNENQWQLSTG. Residues 298-307 are compositionally biased toward polar residues; the sequence is NENQWQLSTG.

Belongs to the fimbrial protein family.

The protein resides in the fimbrium. Essential fimbrial adhesion factor that mediates binding to N-acetylglucosamine-containing receptors in the host intestinal microvilli, leading to colonization of the intestinal tissue, and diarrhea or septicemia. Also confers adhesiveness to laminin and basement membranes. This is F17e-G fimbrial adhesin (f17eG) from Escherichia coli.